Here is a 696-residue protein sequence, read N- to C-terminus: DNA-directed RNA polymerase subunit beta' (696 aa).

Zn(2+) is bound by residues cysteine 76, cysteine 78, cysteine 94, and cysteine 97. The Mg(2+) site is built by aspartate 496, aspartate 498, and aspartate 500.

The protein belongs to the RNA polymerase beta' chain family. RpoC1 subfamily. As to quaternary structure, in plastids the minimal PEP RNA polymerase catalytic core is composed of four subunits: alpha, beta, beta', and beta''. When a (nuclear-encoded) sigma factor is associated with the core the holoenzyme is formed, which can initiate transcription. The cofactor is Mg(2+). Zn(2+) is required as a cofactor.

It is found in the plastid. Its subcellular location is the chloroplast. The catalysed reaction is RNA(n) + a ribonucleoside 5'-triphosphate = RNA(n+1) + diphosphate. DNA-dependent RNA polymerase catalyzes the transcription of DNA into RNA using the four ribonucleoside triphosphates as substrates. This chain is DNA-directed RNA polymerase subunit beta', found in Guizotia abyssinica (Niger).